The sequence spans 220 residues: Ribonuclease HII (220 aa).

Positions 27–220 (CIIVGVDEVG…SKISYMFKNS (194 aa)) constitute an RNase H type-2 domain. 3 residues coordinate a divalent metal cation: aspartate 33, glutamate 34, and aspartate 128.

The protein belongs to the RNase HII family. The cofactor is Mn(2+). It depends on Mg(2+) as a cofactor.

The protein localises to the cytoplasm. It catalyses the reaction Endonucleolytic cleavage to 5'-phosphomonoester.. Its function is as follows. Endonuclease that specifically degrades the RNA of RNA-DNA hybrids. The protein is Ribonuclease HII of Ehrlichia ruminantium (strain Gardel).